The chain runs to 139 residues: Holo-[acyl-carrier-protein] synthase (139 aa).

Residues D8 and E61 each coordinate Mg(2+).

The protein belongs to the P-Pant transferase superfamily. AcpS family. Mg(2+) is required as a cofactor.

Its subcellular location is the cytoplasm. It catalyses the reaction apo-[ACP] + CoA = holo-[ACP] + adenosine 3',5'-bisphosphate + H(+). Functionally, transfers the 4'-phosphopantetheine moiety from coenzyme A to a Ser of acyl-carrier-protein. This is Holo-[acyl-carrier-protein] synthase from Rhodopseudomonas palustris (strain BisB5).